Consider the following 229-residue polypeptide: Cytidylate kinase (229 aa).

ATP is bound at residue 10 to 18; it reads GFSSCGKST.

It belongs to the cytidylate kinase family. Type 1 subfamily.

It is found in the cytoplasm. It carries out the reaction CMP + ATP = CDP + ADP. It catalyses the reaction dCMP + ATP = dCDP + ADP. The protein is Cytidylate kinase of Bacteroides thetaiotaomicron (strain ATCC 29148 / DSM 2079 / JCM 5827 / CCUG 10774 / NCTC 10582 / VPI-5482 / E50).